Here is a 383-residue protein sequence, read N- to C-terminus: Lipid-A-disaccharide synthase (383 aa).

The protein belongs to the LpxB family.

It catalyses the reaction 2-N,3-O-bis[(3R)-3-hydroxytetradecanoyl]-alpha-D-glucosaminyl 1-phosphate + UDP-2-N,3-O-bis[(3R)-3-hydroxytetradecanoyl]-alpha-D-glucosamine = lipid A disaccharide (E. coli) + UDP + H(+). It carries out the reaction a lipid X + a UDP-2-N,3-O-bis[(3R)-3-hydroxyacyl]-alpha-D-glucosamine = a lipid A disaccharide + UDP + H(+). It participates in glycolipid biosynthesis; lipid IV(A) biosynthesis; lipid IV(A) from (3R)-3-hydroxytetradecanoyl-[acyl-carrier-protein] and UDP-N-acetyl-alpha-D-glucosamine: step 5/6. Condensation of UDP-2,3-diacylglucosamine and 2,3-diacylglucosamine-1-phosphate to form lipid A disaccharide, a precursor of lipid A, a phosphorylated glycolipid that anchors the lipopolysaccharide to the outer membrane of the cell. In Pectobacterium carotovorum subsp. carotovorum (strain PC1), this protein is Lipid-A-disaccharide synthase.